The sequence spans 356 residues: (+)-(1(10)E,4E,6S,7R)-germacradien-6-ol synthase (356 aa).

2 residues coordinate Mg(2+): aspartate 86 and aspartate 91. The DDXXXD motif motif lies at 86-91; it reads DDEYCD. Arginine 181 provides a ligand contact to substrate. The Mg(2+) site is built by asparagine 227 and serine 231. Lysine 234 contacts substrate. Glutamate 235 is a Mg(2+) binding site. Position 314–315 (314–315) interacts with substrate; that stretch reads RY.

The protein belongs to the terpene synthase family. Mg(2+) is required as a cofactor.

The enzyme catalyses (2E,6E)-farnesyl diphosphate + H2O = (+)-(1(10)E,4E,6S,7R)-germacradien-6-ol + diphosphate. The protein operates within secondary metabolite biosynthesis; terpenoid biosynthesis. In terms of biological role, catalyzes the conversion of (2E,6E)-farnesyl diphosphate (FPP) to yield the sesquiterpene (+)-(1(10)E,4E,6S,7R)-germacradien-6-ol via a putative 1,10-cyclization, which could require the abstraction of the pyrophosphate from FPP to yield the (E,E)-germacradienyl cation. The only accepted substrate is farnesyl diphosphate (FPP). The sequence is that of (+)-(1(10)E,4E,6S,7R)-germacradien-6-ol synthase from Streptomyces pratensis (strain ATCC 33331 / IAF-45CD).